Reading from the N-terminus, the 103-residue chain is Large ribosomal subunit protein bL21 (103 aa).

The protein belongs to the bacterial ribosomal protein bL21 family. As to quaternary structure, part of the 50S ribosomal subunit. Contacts protein L20.

In terms of biological role, this protein binds to 23S rRNA in the presence of protein L20. The polypeptide is Large ribosomal subunit protein bL21 (Clostridium botulinum (strain Alaska E43 / Type E3)).